Consider the following 105-residue polypeptide: Small ribosomal subunit protein uS10 (105 aa).

The protein belongs to the universal ribosomal protein uS10 family. As to quaternary structure, part of the 30S ribosomal subunit.

Involved in the binding of tRNA to the ribosomes. This chain is Small ribosomal subunit protein uS10, found in Rickettsia conorii (strain ATCC VR-613 / Malish 7).